Here is a 261-residue protein sequence, read N- to C-terminus: Troponin T, slow skeletal muscle (261 aa).

Residues 1 to 30 (MSDTEEQEYEEEQAEDEEAVEEEAPEEPEP) are compositionally biased toward acidic residues. 2 disordered regions span residues 1-61 (MSDT…ERVD) and 108-152 (ERAE…KKKV). The residue at position 2 (Ser-2) is a Phosphoserine; by CK2. Residues 31-40 (VAEREEERPK) are compositionally biased toward basic and acidic residues. Positions 42–54 (SRPVVPPLIPPKI) are enriched in pro residues. Basic and acidic residues predominate over residues 108 to 148 (ERAEQQRFRTEKERERQAKLAEEKMRKEEEEAKKRAEDDAK).

This sequence belongs to the troponin T family. In terms of assembly, interacts with TPM3. In terms of tissue distribution, expressed in soleus muscle. Isoform 4 is predominantly expressed in fast muscles.

In terms of biological role, troponin T is the tropomyosin-binding subunit of troponin, the thin filament regulatory complex which confers calcium-sensitivity to striated muscle actomyosin ATPase activity. In Rattus norvegicus (Rat), this protein is Troponin T, slow skeletal muscle (Tnnt1).